The following is a 217-amino-acid chain: Oxygen regulatory protein NreC (217 aa).

The Response regulatory domain maps to 2 to 119 (KIVIADDHAV…QLISAVRTVY (118 aa)). 4-aspartylphosphate is present on Asp-53. An HTH luxR-type domain is found at 148–213 (TNDPFRILSK…ELVEYALKKK (66 aa)). The segment at residues 172-191 (NKEIAEKLFVSVKTVEAHKT) is a DNA-binding region (H-T-H motif).

Phosphorylated by NreB.

Its subcellular location is the cytoplasm. In terms of biological role, member of the two-component regulatory system NreB/NreC involved in the control of dissimilatory nitrate/nitrite reduction in response to oxygen. Phosphorylated NreC binds to a GC-rich palindromic sequence at the promoters of the nitrate (narGHJI) and nitrite (nir) reductase operons, as well as the putative nitrate transporter gene narT, and activates their expression. This is Oxygen regulatory protein NreC (nreC) from Staphylococcus carnosus (strain TM300).